Reading from the N-terminus, the 713-residue chain is MSIDYKKLWPEALDFESLDQNAQHVDPKDEDFDYAEAFQELDLEEVKQDIESVMTDSQEWWPADYGHYGPLFIRMAWHSAGTYRTTDGRGGASGGYQRLPPVDSWPDNANLDKARRVLWPVKQKYGQNLSWADLIVLAGNVALESMGFETFGFAGGREDDFAPDESVDWGPEEEMEASDRYDEAGELPEPLGATVMGLIYVNPEGPDGEPDLEGSAANIRESFGRMAMNDEETVALIAGGHTFGKVHGADDPDEHVGGPPADAPIDLQGLGWENDFGEGKGPDTITSGIEGPWNTTPTQWDMSYIDNLLDYEWWPEKGPGGAWQWTTESGELDAAAPSVDGSSEKEDVMMLTTDVALKRDPDYREVLERFQENPDEFQEAFAKAWYKLIHRDMGPPERFLGPEVPEETLIWQDPLPDADYDSIGDEEVAELKEALLDSELSVAQLVKTAWASASTYRDSDKRGGANGARIRLEPQRSWEVNEPAALADALETYEAIQEEFNSARSDAVRVSLADLIVLGGNAAVEQAAADAGYDVTVPFEPGRTDATPEQTDVESFEALKPKADGFRNYLSDEAERKPEELLVDKADLLNLTPPEMTVLVGGMRALGATYQDTDRGVFTDEPGTLTNDFFVNILDMDYEWEPVSEDREVFELRDRETGEVEWEGTRFDLIFGSDSRLRAISEVYGADDGEAEFVEDFVDTWSKVMKLDRFDLE.

The segment at residues 77 to 200 is a cross-link (tryptophyl-tyrosyl-methioninium (Trp-Tyr) (with M-226)); sequence WHSAGTYRTT…LGATVMGLIY (124 aa). Residue His78 is the Proton acceptor of the active site. Residues 200 to 226 constitute a cross-link (tryptophyl-tyrosyl-methioninium (Tyr-Met) (with W-77)); that stretch reads YVNPEGPDGEPDLEGSAANIRESFGRM. Position 241 (His241) interacts with heme b.

This sequence belongs to the peroxidase family. Peroxidase/catalase subfamily. Homodimer or homotetramer. Requires heme b as cofactor. In terms of processing, formation of the three residue Trp-Tyr-Met cross-link is important for the catalase, but not the peroxidase activity of the enzyme.

It carries out the reaction H2O2 + AH2 = A + 2 H2O. The catalysed reaction is 2 H2O2 = O2 + 2 H2O. In terms of biological role, bifunctional enzyme with both catalase and broad-spectrum peroxidase activity. This Natronomonas pharaonis (strain ATCC 35678 / DSM 2160 / CIP 103997 / JCM 8858 / NBRC 14720 / NCIMB 2260 / Gabara) (Halobacterium pharaonis) protein is Catalase-peroxidase.